A 630-amino-acid polypeptide reads, in one-letter code: Putative adenylate cyclase regulatory protein (630 aa).

Residues cysteine 10–glutamine 46 form an RING-type zinc finger. 18 LRR repeats span residues phenylalanine 184–lysine 206, threonine 207–proline 230, glutamine 231–histidine 251, lysine 255–arginine 277, serine 278–serine 301, asparagine 302–isoleucine 324, asparagine 325–valine 347, asparagine 348–serine 370, asparagine 371–asparagine 393, asparagine 394–serine 416, lysine 417–lysine 439, glycine 440–histidine 462, histidine 463–threonine 485, glycine 486–arginine 508, asparagine 509–threonine 531, glycine 532–arginine 554, asparagine 555–valine 577, and asparagine 578–methionine 599.

Functionally, may interact with adenylate cyclase to regulate its activity. Its function is as follows. May be involved in the postranscriptional regulation of genes in VSG expression sites. In Trypanosoma equiperdum, this protein is Putative adenylate cyclase regulatory protein (ESAG8C).